The primary structure comprises 213 residues: Na(+)-translocating NADH-quinone reductase subunit E (213 aa).

The next 6 helical transmembrane spans lie at 12-32 (AVFV…FLAV), 40-60 (IGLG…NQLI), 92-112 (FLGF…LEMF), 124-144 (LGIF…SLFM), 155-175 (VVFG…LAGI), and 191-211 (LGIT…FSGI).

The protein belongs to the NqrDE/RnfAE family. Composed of six subunits; NqrA, NqrB, NqrC, NqrD, NqrE and NqrF.

It is found in the cell inner membrane. It catalyses the reaction a ubiquinone + n Na(+)(in) + NADH + H(+) = a ubiquinol + n Na(+)(out) + NAD(+). NQR complex catalyzes the reduction of ubiquinone-1 to ubiquinol by two successive reactions, coupled with the transport of Na(+) ions from the cytoplasm to the periplasm. NqrA to NqrE are probably involved in the second step, the conversion of ubisemiquinone to ubiquinol. This is Na(+)-translocating NADH-quinone reductase subunit E from Rhodopirellula baltica (strain DSM 10527 / NCIMB 13988 / SH1).